The chain runs to 658 residues: UvrABC system protein B (658 aa).

The Helicase ATP-binding domain occupies 26-413 (EGINSGKKKQ…SPEVIEQIIR (388 aa)). 39-46 (GATGTGKT) provides a ligand contact to ATP. The Beta-hairpin motif lies at 92–115 (YYDYYQPEAYVPQTDTFIEKDAQI). A Helicase C-terminal domain is found at 430 to 596 (QIDDLLGEIQ…TIQKGVRDVI (167 aa)). The 36-residue stretch at 622–657 (EKTIAKMEAEMKEAAKALDFERAAELRDLLLELKAE) folds into the UVR domain.

The protein belongs to the UvrB family. Forms a heterotetramer with UvrA during the search for lesions. Interacts with UvrC in an incision complex.

Its subcellular location is the cytoplasm. The UvrABC repair system catalyzes the recognition and processing of DNA lesions. A damage recognition complex composed of 2 UvrA and 2 UvrB subunits scans DNA for abnormalities. Upon binding of the UvrA(2)B(2) complex to a putative damaged site, the DNA wraps around one UvrB monomer. DNA wrap is dependent on ATP binding by UvrB and probably causes local melting of the DNA helix, facilitating insertion of UvrB beta-hairpin between the DNA strands. Then UvrB probes one DNA strand for the presence of a lesion. If a lesion is found the UvrA subunits dissociate and the UvrB-DNA preincision complex is formed. This complex is subsequently bound by UvrC and the second UvrB is released. If no lesion is found, the DNA wraps around the other UvrB subunit that will check the other stand for damage. The chain is UvrABC system protein B from Bacillus cereus (strain ATCC 10987 / NRS 248).